The following is a 487-amino-acid chain: L-tartrate/succinate antiporter (487 aa).

14 helical membrane passes run 10–30 (YLAP…AGLE), 33–53 (TWLY…EPVP), 54–74 (GAVV…WLLF), 93–113 (WAVS…FMFG), 137–157 (TLFL…VTPS), 189–209 (IGSY…AIFL), 236–256 (FLGM…LAYV), 292–312 (LMVG…AAMV), 313–333 (GYSV…DIVS), 340–360 (VFFW…TGFI), 370–390 (SLSG…FYLL), 393–413 (FFAS…AAAL), 418–438 (IPLP…SILT), and 462–482 (LGAI…LLWM).

Belongs to the SLC13A/DASS transporter (TC 2.A.47) family. DIT1 subfamily.

It is found in the cell inner membrane. It catalyses the reaction (2R,3R)-tartrate(out) + succinate(in) = (2R,3R)-tartrate(in) + succinate(out). Functionally, catalyzes the uptake of tartrate in exchange for intracellular succinate. Essential for anaerobic L-tartrate fermentation. This Escherichia coli O6:H1 (strain CFT073 / ATCC 700928 / UPEC) protein is L-tartrate/succinate antiporter (ttdT).